The following is a 331-amino-acid chain: Glycine betaine/proline betaine-binding periplasmic protein (331 aa).

The signal sequence occupies residues 1 to 21 (MRHTVIFASAFATLVTASAFA). Residues Trp86, His90, and 161 to 163 (WGC) contribute to the substrate site. Cys157 and Cys163 are oxidised to a cystine.

As to quaternary structure, the complex is composed of two ATP-binding proteins (ProV), two transmembrane proteins (ProW) and a solute-binding protein (ProX).

It localises to the periplasm. Part of the ProU ABC transporter complex involved in glycine betaine and proline betaine uptake. Binds glycine betaine and proline betaine with high affinity. This is Glycine betaine/proline betaine-binding periplasmic protein (proX) from Salmonella typhimurium (strain LT2 / SGSC1412 / ATCC 700720).